We begin with the raw amino-acid sequence, 707 residues long: Zinc finger protein 60 (707 aa).

The KRAB domain occupies 14–86 (VTFRDVAVDF…VKKETGRPSQ (73 aa)). C2H2-type zinc fingers lie at residues 173–195 (YKCK…ESIH), 201–223 (YECK…QKSH), 229–251 (FECN…KNIH), 257–282 (FECE…RTIH), 288–310 (YKCN…QKIH), 316–338 (FHCK…ENIH), 344–366 (FECK…YDTH), 372–394 (FECN…QKTH), 400–422 (FKCK…QRIH), 428–450 (YQCK…QSIH), 456–478 (FECK…QRFH), 484–506 (FECK…KTSH), 512–534 (FECK…RIIH), 540–562 (YKCN…EKIH), 568–590 (FECK…QTIH), 596–618 (YECE…QRIH), 624–646 (FQCK…ERIH), 652–674 (FQCK…FRIH), and 680–702 (YECS…QSIH).

The protein belongs to the krueppel C2H2-type zinc-finger protein family. In terms of tissue distribution, expressed widely and evenly in most adult mouse tissues.

Its subcellular location is the nucleus. In terms of biological role, may have a role during differentiation processes. This Mus musculus (Mouse) protein is Zinc finger protein 60 (Zfp60).